The chain runs to 872 residues: MKQLTSAQIRQMWLDFWKSKGHAVEPSANLVPVNDPTLLWINSGVATLKKYFDGSVIPENPRITNSQKAIRTNDIENVGKTARHHTMFEMLGNFSVGDYFRDEAIEWGYELLTSPEWFDLPKDKLYMTYYPDDKDSYNRWIACGVEPSHLIPIEDNFWEIGAGPSGPDTEIFFDRGEEFDPDNIGIRLLEEDIENDRYIEIWNIVLSQFNADPAVPRSEYKELPNKNIDTGAGLERLAAVMQGAKTNFETDLFMPIIREIEKMSGKAYDPDGETLSFKVIADHIRSLAFAIGDGALPGNEGRGYVLRRLLRRAVMHGRRLGISDAFLYKLVPTVGQIMESYYPEVLEKRDFIEKIVKREEETFARTIDAGSSMLDELLANLKKSGKDTLEGKDIFKLYDTYGFPVELTEELAEDEGFKIDHEGFKAAMKEQQDRARASVVKGGSMGMQNETLANITEPSEFLYEAETAESRLSVIVADDARHDSVNSGQALLVFEQTPFYAEMGGQVADHGTISDAAGTTVARVVDVQRAPNGQALHTVEVEGELVVGANYKLEIDHSRRHRVMKNHTATHLLHAALHNIVGNHAVQAGSLNEQEFLRFDFTHFEAVTPEELRAIEEQVNEEIWKATPVTTIETDIDTAKSMGAMALFGEKYGKRVRVVSIGDYSVELCGGTHVANTAEIGMFKIIKEEGIGSGTRRILAVTSREAYLAYREEEDALKSIAATLKAPQLKEVPNKVASLQEQLHALQKENATLKEKAAAAAAGDVFKDVKEANGVRYIASQVEVSDAGALRTFADQWKQADYSDVLVLAAHIREKVNVLVASKSENVHAGNLIKVLAPIVSGRGGGKPDMAMAGGSDANSIQDLLSAVAEQF.

Zn(2+)-binding residues include His-567, His-571, Cys-669, and His-673.

It belongs to the class-II aminoacyl-tRNA synthetase family. Zn(2+) serves as cofactor.

It is found in the cytoplasm. The enzyme catalyses tRNA(Ala) + L-alanine + ATP = L-alanyl-tRNA(Ala) + AMP + diphosphate. Catalyzes the attachment of alanine to tRNA(Ala) in a two-step reaction: alanine is first activated by ATP to form Ala-AMP and then transferred to the acceptor end of tRNA(Ala). Also edits incorrectly charged Ser-tRNA(Ala) and Gly-tRNA(Ala) via its editing domain. The polypeptide is Alanine--tRNA ligase (Streptococcus thermophilus (strain CNRZ 1066)).